Consider the following 495-residue polypeptide: Growth/differentiation factor 5 (495 aa).

Residues 1–27 (MRLPKLLTLLLWHLAWLDLELICTVLG) form the signal peptide. A propeptide spanning residues 28-375 (APDLGQRTPG…YLFSQRRKRR (348 aa)) is cleaved from the precursor. The tract at residues 30–162 (DLGQRTPGAK…KEPFRPPPIT (133 aa)) is disordered. The span at 124 to 137 (GGKASSKAGSAPSS) shows a compositional bias: low complexity. Residues 142–156 (KTREPGTPREPKEPF) show a composition bias toward basic and acidic residues. N-linked (GlcNAc...) asparagine glycosylation occurs at Asn183. 3 cysteine pairs are disulfide-bonded: Cys394–Cys460, Cys423–Cys492, and Cys427–Cys494.

Belongs to the TGF-beta family. As to quaternary structure, homodimer; disulfide-linked. Interacts with serine proteases, HTRA1 and HTRA3. Following LPS binding, may form a complex with CXCR4, HSP90AA1 and HSPA8. Interacts with high affinity with NOG; inhibits chondrogenesis. Interacts with high affinity with BMPR1B and lower affinity with BMPR1A; positively regulates chondrocyte differentiation and induces SMAD-dependent signaling. Interacts with FBN1 (via N-terminal domain) and FBN2. Interacts with TGFBR3.

Its subcellular location is the secreted. The protein resides in the cell membrane. In terms of biological role, growth factor involved in bone and cartilage formation. During cartilage development regulates differentiation of chondrogenic tissue through two pathways. Firstly, positively regulates differentiation of chondrogenic tissue through its binding of high affinity with BMPR1B and of less affinity with BMPR1A, leading to induction of SMAD1-SMAD5-SMAD8 complex phosphorylation and then SMAD protein signaling transduction. Secondly, negatively regulates chondrogenic differentiation through its interaction with NOG. Required to prevent excessive muscle loss upon denervation. This function requires SMAD4 and is mediated by phosphorylated SMAD1/5/8. Binds bacterial lipopolysaccharide (LPS) and mediates LPS-induced inflammatory response, including TNF secretion by monocytes. The chain is Growth/differentiation factor 5 (Gdf5) from Mus musculus (Mouse).